The primary structure comprises 381 residues: L-lactate dehydrogenase A-like 6B (381 aa).

Residues 101 to 106 (DVDEGR) and R148 each bind NAD(+). Positions 155, 187, and 218 each coordinate substrate. N187 serves as a coordination point for NAD(+). H242 serves as the catalytic Proton acceptor. T297 lines the substrate pocket.

This sequence belongs to the LDH/MDH superfamily. LDH family.

It catalyses the reaction (S)-lactate + NAD(+) = pyruvate + NADH + H(+). It functions in the pathway fermentation; pyruvate fermentation to lactate; (S)-lactate from pyruvate: step 1/1. This chain is L-lactate dehydrogenase A-like 6B (LDHAL6B), found in Bos taurus (Bovine).